Consider the following 250-residue polypeptide: 2,3-bisphosphoglycerate-dependent phosphoglycerate mutase (250 aa).

Substrate-binding positions include 10 to 17, 23 to 24, Arg-62, 89 to 92, Lys-100, 116 to 117, and 185 to 186; these read RHGESQWN, TG, ERHY, RR, and GN. His-11 serves as the catalytic Tele-phosphohistidine intermediate. The active-site Proton donor/acceptor is the Glu-89.

It belongs to the phosphoglycerate mutase family. BPG-dependent PGAM subfamily. In terms of assembly, homodimer.

The enzyme catalyses (2R)-2-phosphoglycerate = (2R)-3-phosphoglycerate. Its pathway is carbohydrate degradation; glycolysis; pyruvate from D-glyceraldehyde 3-phosphate: step 3/5. Catalyzes the interconversion of 2-phosphoglycerate and 3-phosphoglycerate. This chain is 2,3-bisphosphoglycerate-dependent phosphoglycerate mutase, found in Yersinia pseudotuberculosis serotype IB (strain PB1/+).